The sequence spans 449 residues: Bifunctional protein GlmU (449 aa).

Positions 1–226 are pyrophosphorylase; the sequence is MVAVAILAAG…FQEISGINDR (226 aa). UDP-N-acetyl-alpha-D-glucosamine contacts are provided by residues 7–10, Lys21, Gln73, and 78–79; these read LAAG and GT. Asp103 is a binding site for Mg(2+). UDP-N-acetyl-alpha-D-glucosamine contacts are provided by Gly140, Glu155, Asn170, and Asn224. Asn224 provides a ligand contact to Mg(2+). A linker region spans residues 227–247; it reads FQLSAAYEILQDRIKEKWMKA. Residues 248–449 form an N-acetyltransferase region; it reads GVMIHQPDTV…KEIKGWRLQS (202 aa). Residues Arg329 and Lys347 each contribute to the UDP-N-acetyl-alpha-D-glucosamine site. His359 acts as the Proton acceptor in catalysis. The UDP-N-acetyl-alpha-D-glucosamine site is built by Tyr362 and Asn373. Residues Ala376, 382–383, Ala419, and Arg436 each bind acetyl-CoA; that span reads NY.

The protein in the N-terminal section; belongs to the N-acetylglucosamine-1-phosphate uridyltransferase family. In the C-terminal section; belongs to the transferase hexapeptide repeat family. Homotrimer. It depends on Mg(2+) as a cofactor.

The protein localises to the cytoplasm. It carries out the reaction alpha-D-glucosamine 1-phosphate + acetyl-CoA = N-acetyl-alpha-D-glucosamine 1-phosphate + CoA + H(+). The catalysed reaction is N-acetyl-alpha-D-glucosamine 1-phosphate + UTP + H(+) = UDP-N-acetyl-alpha-D-glucosamine + diphosphate. It functions in the pathway nucleotide-sugar biosynthesis; UDP-N-acetyl-alpha-D-glucosamine biosynthesis; N-acetyl-alpha-D-glucosamine 1-phosphate from alpha-D-glucosamine 6-phosphate (route II): step 2/2. It participates in nucleotide-sugar biosynthesis; UDP-N-acetyl-alpha-D-glucosamine biosynthesis; UDP-N-acetyl-alpha-D-glucosamine from N-acetyl-alpha-D-glucosamine 1-phosphate: step 1/1. Its pathway is bacterial outer membrane biogenesis; LPS lipid A biosynthesis. In terms of biological role, catalyzes the last two sequential reactions in the de novo biosynthetic pathway for UDP-N-acetylglucosamine (UDP-GlcNAc). The C-terminal domain catalyzes the transfer of acetyl group from acetyl coenzyme A to glucosamine-1-phosphate (GlcN-1-P) to produce N-acetylglucosamine-1-phosphate (GlcNAc-1-P), which is converted into UDP-GlcNAc by the transfer of uridine 5-monophosphate (from uridine 5-triphosphate), a reaction catalyzed by the N-terminal domain. In Picosynechococcus sp. (strain ATCC 27264 / PCC 7002 / PR-6) (Agmenellum quadruplicatum), this protein is Bifunctional protein GlmU.